A 382-amino-acid polypeptide reads, in one-letter code: DNA replication and repair protein RecF (382 aa).

Glycine 30–serine 37 is a binding site for ATP.

This sequence belongs to the RecF family.

The protein localises to the cytoplasm. The RecF protein is involved in DNA metabolism; it is required for DNA replication and normal SOS inducibility. RecF binds preferentially to single-stranded, linear DNA. It also seems to bind ATP. The sequence is that of DNA replication and repair protein RecF from Magnetococcus marinus (strain ATCC BAA-1437 / JCM 17883 / MC-1).